The sequence spans 217 residues: uncharacterized protein (217 aa).

The next 6 helical transmembrane spans lie at 13–35 (IWLT…IALL), 50–68 (FSLV…ILYL), 75–94 (FLLA…EWRI), 109–131 (MMAL…LFSL), 152–174 (YLAI…AAAV), and 194–216 (GFSL…FAGL).

Its subcellular location is the cell membrane. This is an uncharacterized protein from Archaeoglobus fulgidus (strain ATCC 49558 / DSM 4304 / JCM 9628 / NBRC 100126 / VC-16).